Consider the following 382-residue polypeptide: Galactokinase (382 aa).

E34–D37 contacts substrate. An ATP-binding site is contributed by G124–S130. Mg(2+) is bound by residues S130 and E162. D174 serves as the catalytic Proton acceptor. Substrate is bound at residue Y223.

This sequence belongs to the GHMP kinase family. GalK subfamily.

It localises to the cytoplasm. It catalyses the reaction alpha-D-galactose + ATP = alpha-D-galactose 1-phosphate + ADP + H(+). It participates in carbohydrate metabolism; galactose metabolism. Functionally, catalyzes the transfer of the gamma-phosphate of ATP to D-galactose to form alpha-D-galactose-1-phosphate (Gal-1-P). This chain is Galactokinase, found in Salmonella agona (strain SL483).